Consider the following 344-residue polypeptide: MSEASLSTYYTTIYPTKCPPDPRFLVSKEGLAFCCQIIGFISLPMHFFTGYCILMKTPATMKHVKLSLVNLNIWYIISQVIVSFFITSYNFYPSLASFSVGYATALNFPTVVQICILYTINDAVHVSITLLFEIRSSLILKNRFRISSSRGRGYWLAGNFFGTVFITSPVFFNLADQNAEKMKILEAIPCPSKEFFLEPITVFATSGAWNTYLLISRSLKSIYMLQIIFFTSCCIYYLVIVKTDQVSAQTRRIQARSFYGLIIQTLIPAAFTLIPSVLISSRSAPDQLVNNLVSISYAVHIVVGSLAILLVHHPYRLFIKSIFVKSKESVIVPVVSTSMFKVIK.

7 consecutive transmembrane segments (helical) span residues 30 to 50 (GLAFCCQIIGFISLPMHFFTG), 66 to 86 (LSLVNLNIWYIISQVIVSFFI), 110 to 132 (TVVQICILYTINDAVHVSITLLF), 155 to 175 (WLAGNFFGTVFITSPVFFNLA), 221 to 241 (SIYMLQIIFFTSCCIYYLVIV), 259 to 279 (YGLIIQTLIPAAFTLIPSVLI), and 292 to 312 (LVSISYAVHIVVGSLAILLVH).

This sequence belongs to the nematode receptor-like protein srh family.

The protein localises to the membrane. The polypeptide is Serpentine receptor class H-72 (srh-72) (Caenorhabditis elegans).